The chain runs to 367 residues: Germination protease (367 aa).

Positions 1–15 are excised as a propeptide; that stretch reads MKEPLDLSKYSVRTD.

Belongs to the peptidase A25 family. In terms of assembly, homotetramer. Autoproteolytically processed. The inactive tetrameric zymogen termed p46 autoprocesses to a smaller form termed p41, which is active only during spore germination.

The enzyme catalyses Endopeptidase action with P4 Glu or Asp, P1 preferably Glu &gt; Asp, P1' hydrophobic and P2' Ala.. Initiates the rapid degradation of small, acid-soluble proteins during spore germination. In Bacillus thuringiensis subsp. konkukian (strain 97-27), this protein is Germination protease.